Reading from the N-terminus, the 256-residue chain is Hypodermin-B (256 aa).

Residues 1-22 (MLKFVILVCSVACVFGAVVPGG) form the signal peptide. A propeptide spans 23–30 (MLPQLDGR) (activation peptide). Positions 31–254 (IVGGFEADIE…VRSWITENAK (224 aa)) constitute a Peptidase S1 domain. A disulfide bond links cysteine 56 and cysteine 72. Active-site charge relay system residues include histidine 71 and aspartate 116. 2 cysteine pairs are disulfide-bonded: cysteine 180-cysteine 197 and cysteine 206-cysteine 230. The active-site Charge relay system is the serine 210.

The protein belongs to the peptidase S1 family.

Its subcellular location is the secreted. Functionally, protease that shows preferential cleavage after Arg and Lys residues. The protein is Hypodermin-B of Hypoderma lineatum (Early cattle grub).